The chain runs to 817 residues: Putative receptor protein kinase ZmPK1 (817 aa).

An N-terminal signal peptide occupies residues 1 to 28; the sequence is MPRPLAALLSTACILSFFIALFPRAASS. Residues 29–158 enclose the Bulb-type lectin domain; that stretch reads RDILPLGSSL…GGNTVWQSFD (130 aa). Over 29 to 472 the chain is Extracellular; that stretch reads RDILPLGSSL…HKTGGGESKW (444 aa). Residues Asn83, Asn128, Asn228, and Asn279 are each glycosylated (N-linked (GlcNAc...) asparagine). The EGF-like domain occupies 292–328; that stretch reads MTQPCNIHGLCGPNGICHYSPTPTCSCPPGYATRNPG. Disulfide bonds link Cys296–Cys308 and Cys302–Cys316. N-linked (GlcNAc...) asparagine glycosylation is found at Asn329 and Asn339. The 83-residue stretch at 342–424 folds into the PAN domain; it reads CDRYDKRSMR…VRTIYLKLPT (83 aa). 2 disulfide bridges follow: Cys376/Cys398 and Cys384/Cys386. A glycan (N-linked (GlcNAc...) asparagine) is linked at Asn452. The chain crosses the membrane as a helical span at residues 473-498; it reads FYFYGFIAAFFVVEVSFISFAWFFVL. Residues 499–817 lie on the Cytoplasmic side of the membrane; it reads KRELRPSELW…AVQTLLSADD (319 aa). The 284-residue stretch at 534 to 817 folds into the Protein kinase domain; the sequence is RKFKVELGRG…AVQTLLSADD (284 aa). ATP is bound by residues 540–548 and Lys562; that span reads LGRGESGTV. The active-site Proton acceptor is the Asp658.

This sequence belongs to the protein kinase superfamily. Ser/Thr protein kinase family. As to expression, expressed predominantly in the shoots and roots of young maize seedlings, and to a lesser extent in the silks.

The protein localises to the membrane. It catalyses the reaction L-seryl-[protein] + ATP = O-phospho-L-seryl-[protein] + ADP + H(+). The enzyme catalyses L-threonyl-[protein] + ATP = O-phospho-L-threonyl-[protein] + ADP + H(+). Probable receptor. Interaction with a ligand in the extracellular domain triggers the protein kinase activity of the cytoplasmic domain. The polypeptide is Putative receptor protein kinase ZmPK1 (PK1) (Zea mays (Maize)).